The following is a 627-amino-acid chain: Altered inheritance of mitochondria protein 9, mitochondrial (627 aa).

Residues 1–43 (MIRYTVAGHSRRCVVGASKRVGAIKCITVAATKRFISNKPNEV) constitute a mitochondrion transit peptide.

The protein belongs to the AIM9 family.

It localises to the mitochondrion. This Saccharomyces cerevisiae (strain ATCC 204508 / S288c) (Baker's yeast) protein is Altered inheritance of mitochondria protein 9, mitochondrial (AIM9).